Reading from the N-terminus, the 238-residue chain is ATP synthase subunit a (238 aa).

Helical transmembrane passes span 18–38 (LTLLAVCIVTILLIFGFVFWA), 76–96 (YSLLLFTIFLFVAVANNLGLF), 114–134 (NLAFDLALSLFVTLLVHIEGI), 166–186 (SLAIRLFGNIFAGEVVTGLIV), and 193–213 (LYWWPIAFLVNIAWTAFSIFI).

The protein belongs to the ATPase A chain family. In terms of assembly, F-type ATPases have 2 components, CF(1) - the catalytic core - and CF(0) - the membrane proton channel. CF(1) has five subunits: alpha(3), beta(3), gamma(1), delta(1), epsilon(1). CF(0) has three main subunits: a(1), b(2) and c(9-12). The alpha and beta chains form an alternating ring which encloses part of the gamma chain. CF(1) is attached to CF(0) by a central stalk formed by the gamma and epsilon chains, while a peripheral stalk is formed by the delta and b chains.

It is found in the cell membrane. Its function is as follows. Key component of the proton channel; it plays a direct role in the translocation of protons across the membrane. This Streptococcus equi subsp. zooepidemicus (strain H70) protein is ATP synthase subunit a.